The primary structure comprises 146 residues: Ribonuclease H (146 aa).

The RNase H type-1 domain maps to 1–143; it reads MKKQVTIYTD…CDQLAREAIK (143 aa). D10, E48, D70, and D135 together coordinate Mg(2+).

Belongs to the RNase H family. As to quaternary structure, monomer. Requires Mg(2+) as cofactor.

The protein resides in the cytoplasm. It carries out the reaction Endonucleolytic cleavage to 5'-phosphomonoester.. Endonuclease that specifically degrades the RNA of RNA-DNA hybrids. This chain is Ribonuclease H, found in Chlorobium chlorochromatii (strain CaD3).